A 1069-amino-acid chain; its full sequence is Epstein-Barr nuclear antigen 6 (1069 aa).

Disordered stretches follow at residues 1–75 (MESF…RIRR), 353–708 (MLAT…PCQS), 733–776 (SSMS…LYPG), 884–932 (REPR…PPRL), and 1008–1069 (PLDI…SELD). Residues 50-67 (PDSRDQQSRGQRRGDENR) are compositionally biased toward basic and acidic residues. Composition is skewed to acidic residues over residues 381–391 (VELESSDDELP) and 507–524 (YDDDIIEVIDVETTEEET). Positions 543-561 (STGSAMSSSHTDPSVTQPS) are enriched in polar residues. Residues 689–708 (QQEPSSQQQPATQSTPPCQS) show a composition bias toward low complexity. The span at 742–751 (SHEEQPRYED) shows a compositional bias: basic and acidic residues. Positions 1032-1048 (SQATSEAQEILSDNSEI) are enriched in polar residues.

This sequence belongs to the herpesviridae EBNA-6 family. In terms of assembly, interacts with host CTPB1; this interaction leads to gene repression, but also seems to interfere with the repressive function of CtBP pre-bound to DNA, leading to EBNA6 mediated up-regulation of many host genes. Interacts with host MYC; this interaction enhances MYC stability. Interacts (via N-terminus) with host RBPJ. Interacts (via N-terminus) with host histone H2AX; this interaction facilitates H2AX proteasomal degradation. Interacts with host TP73; this interaction inhibits TP73-mediated apoptotic pathway. Interacts (via N-terminus) with host PIM1; this interaction upregulates and stabilizes PIM1 and induces cell proliferation by inhibiting the growth suppressive properties of p21.

Its subcellular location is the host nucleus. It localises to the host nucleus matrix. Its function is as follows. Plays an essential role for the activation and immortalization of human B-cells. Represses transcription of viral promoters TP1 and Cp through interaction with host RBPJ, and inhibits EBNA2-mediated activation of these promoters. Targets host chromatin through interactions with host transcription factors, especially RBPJ and IRF4. Alternatively, EBNA6 also regulates the transcription of the EBV oncogene LMP1 in a cell cycle-dependent manner. Modulates the activity of several host proteins involved in cell cycle regulation including host cyclin A, MYC, RB, p21 and p27 mainly through binding to the host SCF(SKP2) complex. Inhibits the promoter of host H2AX and targets H2AX to proteasomal degradation in order to promote latency and cell proliferation. Upregulates host PIM1 expression and stabilization. Potentiates PIM1 to promote cell proliferation by inhibiting the growth suppressive properties of p21. The polypeptide is Epstein-Barr nuclear antigen 6 (EBNA6) (Epstein-Barr virus (strain AG876) (HHV-4)).